A 33-amino-acid polypeptide reads, in one-letter code: pyr operon leader peptide (33 aa).

The protein is pyr operon leader peptide (pyrL) of Salmonella typhi.